The primary structure comprises 393 residues: Thyrotropin-releasing hormone receptor (393 aa).

Over 1–28 the chain is Extracellular; it reads MENDTVSEMNQTELQPQAAVALEYQVVT. N-linked (GlcNAc...) asparagine glycosylation is found at N3 and N10. A helical membrane pass occupies residues 29-51; that stretch reads ILLVVIICGLGIVGNIMVVLVVM. At 52–61 the chain is on the cytoplasmic side; it reads RTKHMRTPTN. Residues 62–83 traverse the membrane as a helical segment; that stretch reads CYLVSLAVADLMVLVAAGLPNI. The Extracellular portion of the chain corresponds to 84 to 99; that stretch reads TDSIYGSWVYGYVGCL. A disulfide bridge links C98 with C179. A helical transmembrane segment spans residues 100–121; the sequence is CITYLQYLGINASSCSITAFTI. Topologically, residues 122–144 are cytoplasmic; the sequence is ERYIAICHPIKAQFLCTFSRAKK. The helical transmembrane segment at 145–168 threads the bilayer; it reads IIIFVWAFTSIYCMLWFFLLDLNI. The Extracellular portion of the chain corresponds to 169 to 193; sequence STYKNAVVVSCGYKISRNYYSPIYL. The helical transmembrane segment at 194 to 215 threads the bilayer; the sequence is MDFGVFYVVPMILATVLYGFIA. The Cytoplasmic segment spans residues 216–266; that stretch reads RILFLNPIPSDPKENSKMWKNDSIHQNKNLNLNATNRCFNSTVSSRKQVTK. Residues 267–288 traverse the membrane as a helical segment; the sequence is MLAVVVILFALLWMPYRTLVVV. Residues 289–296 lie on the Extracellular side of the membrane; that stretch reads NSFLSSPF. A helical transmembrane segment spans residues 297-319; the sequence is QENWFLLFCRICIYLNSAINPVI. The Cytoplasmic segment spans residues 320 to 393; it reads YNLMSQKFRA…FDDTCLASEN (74 aa).

This sequence belongs to the G-protein coupled receptor 1 family.

The protein resides in the cell membrane. Its function is as follows. Receptor for thyrotropin-releasing hormone (TRH). Upon ligand binding, this G-protein-coupled receptor triggers activation of the phosphatidylinositol (IP3)-calcium-protein kinase C (PKC) pathway. The chain is Thyrotropin-releasing hormone receptor (Trhr) from Mus musculus (Mouse).